Consider the following 301-residue polypeptide: MTLDRDAASHVAEVLSEALPYIRRFVGKTLVIKYGGNAMESEELKTGFARDIVLMKAVGINPVVVHGGGPQIGDLLKRLSIESHFIDGMRVTDAATMDVVEMVLGGQVNKDIVNLINRHGGSAIGLTGKDAELIRAKKLTVSRQTPEMTQPEIIDIGHVGEVVSVNTDLLNMLVKGDFIPVIAPIGVGANGESYNINADLVAGKVAEALKAEKLMLLTNIAGLMDKQGQVLTGLTTEQVNELIADGTIYGGMLPKIKCALEAVQGGVNSSHIIDGRVPNAVLLEIFTDSGVGTLITNRKPR.

Residues 68-69 (GG), Arg-90, and Asn-195 contribute to the substrate site.

The protein belongs to the acetylglutamate kinase family. ArgB subfamily.

It localises to the cytoplasm. It catalyses the reaction N-acetyl-L-glutamate + ATP = N-acetyl-L-glutamyl 5-phosphate + ADP. Its pathway is amino-acid biosynthesis; L-arginine biosynthesis; N(2)-acetyl-L-ornithine from L-glutamate: step 2/4. In terms of biological role, catalyzes the ATP-dependent phosphorylation of N-acetyl-L-glutamate. This Pseudomonas putida (strain W619) protein is Acetylglutamate kinase.